The sequence spans 309 residues: Pantothenate kinase (309 aa).

92–99 contributes to the ATP binding site; sequence GSVAVGKT.

This sequence belongs to the prokaryotic pantothenate kinase family.

The protein resides in the cytoplasm. The catalysed reaction is (R)-pantothenate + ATP = (R)-4'-phosphopantothenate + ADP + H(+). The protein operates within cofactor biosynthesis; coenzyme A biosynthesis; CoA from (R)-pantothenate: step 1/5. This Lactiplantibacillus plantarum (strain ATCC BAA-793 / NCIMB 8826 / WCFS1) (Lactobacillus plantarum) protein is Pantothenate kinase (coaA).